Consider the following 314-residue polypeptide: Inositol oxygenase 5 (314 aa).

Substrate contacts are provided by residues R54 and D112–S114. The Fe cation site is built by H125, H150, and D151. Substrate-binding positions include K154 and G171 to D172. Fe cation is bound by residues H223, H249, and D282. H249–S250 contributes to the substrate binding site.

The protein belongs to the myo-inositol oxygenase family. Requires Fe cation as cofactor. Expressed in flowers and siliques.

Its subcellular location is the cytoplasm. The enzyme catalyses myo-inositol + O2 = D-glucuronate + H2O + H(+). It participates in polyol metabolism; myo-inositol degradation into D-glucuronate; D-glucuronate from myo-inositol: step 1/1. Its function is as follows. Involved in the biosynthesis of UDP-glucuronic acid (UDP-GlcA), providing nucleotide sugars for cell-wall polymers. May be also involved in plant ascorbate biosynthesis. The polypeptide is Inositol oxygenase 5 (MIOX5) (Arabidopsis thaliana (Mouse-ear cress)).